The sequence spans 100 residues: Large ribosomal subunit protein uL23 (100 aa).

The protein belongs to the universal ribosomal protein uL23 family. In terms of assembly, part of the 50S ribosomal subunit. Contacts protein L29, and trigger factor when it is bound to the ribosome.

Functionally, one of the early assembly proteins it binds 23S rRNA. One of the proteins that surrounds the polypeptide exit tunnel on the outside of the ribosome. Forms the main docking site for trigger factor binding to the ribosome. The chain is Large ribosomal subunit protein uL23 from Prochlorococcus marinus (strain MIT 9313).